The chain runs to 421 residues: Heterogeneous nuclear ribonucleoprotein 27C (421 aa).

RRM domains lie at 7–88 (GKLF…RTLQ) and 96–173 (YKVF…KAEP). Disordered regions lie at residues 171 to 191 (AEPR…GGAY) and 240 to 373 (GTSP…SEYD). Ser-177 carries the phosphoserine modification. The segment covering 240–250 (GTSPQQQQYGY) has biased composition (polar residues). Pro residues predominate over residues 264-273 (PPGPQGPPPQ). The span at 275–284 (SNYAGPQQTQ) shows a compositional bias: polar residues. Residues 293 to 302 (NSTSTGAPSG) show a composition bias toward low complexity. Phosphoserine is present on residues Ser-366, Ser-368, and Ser-370. A Phosphotyrosine modification is found at Tyr-372. At Ser-379 the chain carries Phosphoserine. Positions 392–421 (EGASNYGAGPRSAYGNDSSTQPPYATSQAV) are disordered. The span at 406-421 (GNDSSTQPPYATSQAV) shows a compositional bias: polar residues.

In terms of assembly, interacts with sqd; the interaction is RNA-dependent and may be specific for sqd isoform A/sqdA. Interacts with otu; the interaction is RNA-independent.

The protein localises to the nucleus. The protein resides in the cytoplasm. In terms of biological role, this protein is a component of ribonucleosomes. Could be needed to organize a concentration gradient of a dorsalizing morphogen (Dm) originating in the germinal vesicle. Interacts with grk mRNA (via 3' UTR) and involved in its localization to the dorsal anterior region of the oocyte during dorsal-ventral axis determination; may function as a ribonuclear protein complex together with sqd and otu. Required for polytene chromosome dispersal in nurse cells during oogenesis. May be involved in the regulation of splicing. This Drosophila melanogaster (Fruit fly) protein is Heterogeneous nuclear ribonucleoprotein 27C.